The following is a 208-amino-acid chain: UPF0316 protein SERP1448 (208 aa).

3 helical membrane passes run 8-28 (PWLMVLAIFIINVCYVTFLTM), 40-60 (VAAVVSFMEVLVYVVGLGLVM), and 66-86 (IQNIFAYALGFSVGIIVGMKI).

Belongs to the UPF0316 family.

The protein localises to the cell membrane. This is UPF0316 protein SERP1448 from Staphylococcus epidermidis (strain ATCC 35984 / DSM 28319 / BCRC 17069 / CCUG 31568 / BM 3577 / RP62A).